The sequence spans 1215 residues: Zinc finger E-box-binding homeobox 2 (1215 aa).

The tract at residues 1 to 111 (MKQPIMADGP…ILQASVAGPE (111 aa)) is disordered. Residues 12-24 (CKRRKQANPRRKN) are compositionally biased toward basic residues. Residues 57–74 (DQDTSPASMPNHESSPHM) are compositionally biased toward polar residues. The span at 89–98 (RESVVEHSWH) shows a compositional bias: basic and acidic residues. Position 142 is a phosphoserine (Ser-142). C2H2-type zinc fingers lie at residues 211–234 (LTCP…KYRH), 241–263 (FSCP…MVTH), and 282–304 (FKCT…LRIH). Residues 310–334 (YECPNCKKRFSHSGSYSSHISSKKC) form a C2H2-type 4; atypical zinc finger. Ser-356, Ser-360, and Ser-364 each carry phosphoserine. The residue at position 377 (Lys-377) is an N6-acetyllysine. A Glycyl lysine isopeptide (Lys-Gly) (interchain with G-Cter in SUMO); alternate cross-link involves residue Lys-391. A Glycyl lysine isopeptide (Lys-Gly) (interchain with G-Cter in SUMO2); alternate cross-link involves residue Lys-391. The segment at 437-487 (QHLGVGMEAPLLGFPTMNSNLSEVQKVLQIVDNTVSRQKMDCKTEDISKLK) is SMAD-MH2 binding domain. Glycyl lysine isopeptide (Lys-Gly) (interchain with G-Cter in SUMO2) cross-links involve residues Lys-479 and Lys-555. The segment at 581–605 (FSCQFCKESFPGPIPLHQHERYLCK) adopts a C2H2-type 5; degenerate zinc-finger fold. Residues Lys-611 and Lys-632 each participate in a glycyl lysine isopeptide (Lys-Gly) (interchain with G-Cter in SUMO2) cross-link. The homeobox; atypical DNA-binding region spans 644–703 (GLTSPINPYKDHMSVLKAYYAMNMEPNSDELLKISIAVGLPQEFVKEWFEQRKVYQYSNS). Ser-647 is subject to Phosphoserine. Disordered stretches follow at residues 702–740 (NSRS…DSIT) and 772–811 (VDKL…SEEL). Lys-713 is covalently cross-linked (Glycyl lysine isopeptide (Lys-Gly) (interchain with G-Cter in SUMO2)). A phosphoserine mark is found at Ser-731 and Ser-780. Low complexity predominate over residues 780–808 (SNTPSPLNLSSTSSKNSHSSSYTPNSFSS). A Phosphothreonine modification is found at Thr-782. Position 784 is a phosphoserine (Ser-784). Lys-866 is covalently cross-linked (Glycyl lysine isopeptide (Lys-Gly) (interchain with G-Cter in SUMO); alternate). A Glycyl lysine isopeptide (Lys-Gly) (interchain with G-Cter in SUMO2); alternate cross-link involves residue Lys-866. C2H2-type zinc fingers lie at residues 999–1021 (YACD…KYEH) and 1027–1049 (HQCQ…SRLH). A C2H2-type 8; atypical zinc finger spans residues 1055–1076 (YQCDKCGKRFSHSGSYSQHMNH). The interval 1117–1215 (TPQGYSDSEE…EEDNMEDGME (99 aa)) is disordered. Phosphoserine occurs at positions 1122 and 1124. Residues 1127–1149 (RESMPRDGESEKEHEKEGEEGYG) show a composition bias toward basic and acidic residues. The segment covering 1157-1167 (DEEEEEEEEES) has biased composition (acidic residues). Basic and acidic residues-rich tracts occupy residues 1168–1179 (ENKSMDTDPETI) and 1186–1205 (GDHS…KSDH). Ser-1203 is modified (phosphoserine). Residues 1206-1215 (EEDNMEDGME) are compositionally biased toward acidic residues.

This sequence belongs to the delta-EF1/ZFH-1 C2H2-type zinc-finger family. As to quaternary structure, interacts with CBX4 and CTBP1. Binds activated SMAD1, activated SMAD2 and activated SMAD3; binding with SMAD4 is not detected. In terms of processing, sumoylation on Lys-391 and Lys-866 is promoted by the E3 SUMO-protein ligase CBX4, and impairs interaction with CTBP1 and transcription repression activity.

It localises to the nucleus. Its subcellular location is the chromosome. Functionally, transcriptional inhibitor that binds to DNA sequence 5'-CACCT-3' in different promoters. Represses transcription of E-cadherin. Represses expression of MEOX2. The polypeptide is Zinc finger E-box-binding homeobox 2 (Zeb2) (Mus musculus (Mouse)).